The chain runs to 495 residues: Glutamate--tRNA ligase (495 aa).

The 'HIGH' region motif lies at Pro-13–Leu-23. The 'KMSKS' region motif lies at Lys-257 to Arg-261. Lys-260 contacts ATP.

It belongs to the class-I aminoacyl-tRNA synthetase family. Glutamate--tRNA ligase type 1 subfamily. In terms of assembly, monomer.

Its subcellular location is the cytoplasm. It catalyses the reaction tRNA(Glu) + L-glutamate + ATP = L-glutamyl-tRNA(Glu) + AMP + diphosphate. Its function is as follows. Catalyzes the attachment of glutamate to tRNA(Glu) in a two-step reaction: glutamate is first activated by ATP to form Glu-AMP and then transferred to the acceptor end of tRNA(Glu). The protein is Glutamate--tRNA ligase of Mycolicibacterium vanbaalenii (strain DSM 7251 / JCM 13017 / BCRC 16820 / KCTC 9966 / NRRL B-24157 / PYR-1) (Mycobacterium vanbaalenii).